The chain runs to 469 residues: Alpha,alpha-trehalose-phosphate synthase [UDP-forming] (469 aa).

Residues Tyr-87 and Asp-141 each coordinate D-glucose 6-phosphate. Positions 279 and 284 each coordinate UDP. UDP-alpha-D-glucose-binding residues include Arg-279 and Lys-284. Arg-317 is a binding site for D-glucose 6-phosphate. 378–386 (DGMNLVSYE) is a binding site for UDP-alpha-D-glucose. 382 to 386 (LVSYE) lines the UDP pocket.

The protein belongs to the glycosyltransferase 20 family.

The enzyme catalyses D-glucose 6-phosphate + UDP-alpha-D-glucose = alpha,alpha-trehalose 6-phosphate + UDP + H(+). The protein operates within carbohydrate biosynthesis. In terms of biological role, synthase catalytic subunit of the trehalose synthase complex that catalyzes the production of trehalose from glucose-6-phosphate and UDP-alpha-D-glucose in a two step process. The disaccharide trehalose serves as a storage carbohydrate that is mobilized during spore germination. This is Alpha,alpha-trehalose-phosphate synthase [UDP-forming] from Yarrowia lipolytica (strain CLIB 122 / E 150) (Yeast).